The following is a 793-amino-acid chain: Wall-associated receptor kinase-like 18 (793 aa).

The first 28 residues, methionine 1–alanine 28, serve as a signal peptide directing secretion. Residues cysteine 29 to alanine 378 are Extracellular-facing. N-linked (GlcNAc...) asparagine glycans are attached at residues asparagine 60, asparagine 130, asparagine 170, asparagine 238, asparagine 285, and asparagine 304. Residues cysteine 312 to cysteine 371 form an atypical EGF-like region. Intrachain disulfides connect cysteine 314-cysteine 327, cysteine 349-cysteine 362, and cysteine 356-cysteine 371. A helical transmembrane segment spans residues isoleucine 379 to leucine 399. Over arginine 400–tryptophan 793 the chain is Cytoplasmic. Positions phenylalanine 453–isoleucine 728 constitute a Protein kinase domain. Residues leucine 459–valine 467 and lysine 481 each bind ATP. A Phosphotyrosine modification is found at tyrosine 526. Residue aspartate 579 is the Proton acceptor of the active site. A phosphothreonine mark is found at threonine 613 and threonine 618. Tyrosine 626 carries the post-translational modification Phosphotyrosine. The disordered stretch occupies residues glutamate 733–threonine 757. Positions aspartate 742–valine 754 are enriched in acidic residues.

The protein belongs to the protein kinase superfamily. Ser/Thr protein kinase family.

It is found in the membrane. The catalysed reaction is L-seryl-[protein] + ATP = O-phospho-L-seryl-[protein] + ADP + H(+). It carries out the reaction L-threonyl-[protein] + ATP = O-phospho-L-threonyl-[protein] + ADP + H(+). In terms of biological role, serine/threonine-protein kinase that may function as a signaling receptor of extracellular matrix component. This chain is Wall-associated receptor kinase-like 18 (WAKL18), found in Arabidopsis thaliana (Mouse-ear cress).